The following is a 145-amino-acid chain: Peptide methionine sulfoxide reductase MsrB (145 aa).

Positions 6–129 (KNERLQQLTD…NSAALRFIPV (124 aa)) constitute a MsrB domain. Cys-118 acts as the Nucleophile in catalysis.

Belongs to the MsrB Met sulfoxide reductase family.

It carries out the reaction L-methionyl-[protein] + [thioredoxin]-disulfide + H2O = L-methionyl-(R)-S-oxide-[protein] + [thioredoxin]-dithiol. The polypeptide is Peptide methionine sulfoxide reductase MsrB (Listeria monocytogenes serotype 4a (strain HCC23)).